A 137-amino-acid chain; its full sequence is BolA-like protein 1 (137 aa).

Phosphoserine is present on serine 81. A disordered region spans residues 114-137; it reads WGENSQLDTSPPCLGGNKKTLGTP.

The protein belongs to the BolA/IbaG family. As to quaternary structure, interacts with GLRX5.

It localises to the mitochondrion. In terms of biological role, acts as a mitochondrial iron-sulfur (Fe-S) cluster assembly factor that facilitates (Fe-S) cluster insertion into a subset of mitochondrial proteins. Probably acts together with the monothiol glutaredoxin GLRX5. May protect cells against oxidative stress. This chain is BolA-like protein 1 (BOLA1), found in Pongo abelii (Sumatran orangutan).